Reading from the N-terminus, the 246-residue chain is Mast cell protease 9 (246 aa).

Residues 1 to 18 (MQALLFLMALLLPSRAGA) form the signal peptide. The propeptide at 19-20 (EE) is activation peptide. The Peptidase S1 domain occupies 21–244 (IIGGVESEPH…HVPWINRVIK (224 aa)). The cysteines at positions 50 and 66 are disulfide-linked. Residues histidine 65 and aspartate 109 each act as charge relay system in the active site. 2 cysteine pairs are disulfide-bonded: cysteine 143–cysteine 208 and cysteine 174–cysteine 187. The active-site Charge relay system is serine 202.

It belongs to the peptidase S1 family. Granzyme subfamily. In terms of tissue distribution, selectively expressed in uterine mast cells.

This chain is Mast cell protease 9 (Mcpt9), found in Mus musculus (Mouse).